The sequence spans 181 residues: Protein GrpE (181 aa).

Residues 1-21 are disordered; it reads MNKEQQDLQTEQEAAVETAEL. Positions 8 to 21 are enriched in low complexity; it reads LQTEQEAAVETAEL.

Belongs to the GrpE family. In terms of assembly, homodimer.

It localises to the cytoplasm. Its function is as follows. Participates actively in the response to hyperosmotic and heat shock by preventing the aggregation of stress-denatured proteins, in association with DnaK and GrpE. It is the nucleotide exchange factor for DnaK and may function as a thermosensor. Unfolded proteins bind initially to DnaJ; upon interaction with the DnaJ-bound protein, DnaK hydrolyzes its bound ATP, resulting in the formation of a stable complex. GrpE releases ADP from DnaK; ATP binding to DnaK triggers the release of the substrate protein, thus completing the reaction cycle. Several rounds of ATP-dependent interactions between DnaJ, DnaK and GrpE are required for fully efficient folding. The protein is Protein GrpE of Trichlorobacter lovleyi (strain ATCC BAA-1151 / DSM 17278 / SZ) (Geobacter lovleyi).